A 504-amino-acid chain; its full sequence is 26S proteasome non-ATPase regulatory subunit 5 (504 aa).

The residue at position 2 (alanine 2) is an N-acetylalanine.

The protein belongs to the proteasome subunit S5B/HSM3 family. In terms of assembly, interacts with PSMC1, PSMC2, PSMD1 and PSMD6. Part of transient complex containing PSMD5, PSMC2, PSMC1 and PSMD2 formed during the assembly of the 26S proteasome.

Functionally, acts as a chaperone during the assembly of the 26S proteasome, specifically of the base subcomplex of the PA700/19S regulatory complex (RC). In the initial step of the base subcomplex assembly is part of an intermediate PSMD5:PSMC2:PSMC1:PSMD2 module which probably assembles with a PSMD10:PSMC4:PSMC5:PAAF1 module followed by dissociation of PSMD5. This Homo sapiens (Human) protein is 26S proteasome non-ATPase regulatory subunit 5 (PSMD5).